Reading from the N-terminus, the 145-residue chain is Transcriptional regulator MraZ (145 aa).

SpoVT-AbrB domains are found at residues 5 to 50 (TFNH…ALPQ) and 81 to 124 (AHEV…DKAA).

Belongs to the MraZ family. As to quaternary structure, forms oligomers.

The protein localises to the cytoplasm. It is found in the nucleoid. This chain is Transcriptional regulator MraZ, found in Anaeromyxobacter sp. (strain Fw109-5).